Here is a 475-residue protein sequence, read N- to C-terminus: Aspartyl/glutamyl-tRNA(Asn/Gln) amidotransferase subunit B (475 aa).

Belongs to the GatB/GatE family. GatB subfamily. As to quaternary structure, heterotrimer of A, B and C subunits.

It catalyses the reaction L-glutamyl-tRNA(Gln) + L-glutamine + ATP + H2O = L-glutaminyl-tRNA(Gln) + L-glutamate + ADP + phosphate + H(+). The catalysed reaction is L-aspartyl-tRNA(Asn) + L-glutamine + ATP + H2O = L-asparaginyl-tRNA(Asn) + L-glutamate + ADP + phosphate + 2 H(+). In terms of biological role, allows the formation of correctly charged Asn-tRNA(Asn) or Gln-tRNA(Gln) through the transamidation of misacylated Asp-tRNA(Asn) or Glu-tRNA(Gln) in organisms which lack either or both of asparaginyl-tRNA or glutaminyl-tRNA synthetases. The reaction takes place in the presence of glutamine and ATP through an activated phospho-Asp-tRNA(Asn) or phospho-Glu-tRNA(Gln). The chain is Aspartyl/glutamyl-tRNA(Asn/Gln) amidotransferase subunit B from Bacillus cereus (strain G9842).